The following is a 60-amino-acid chain: Large ribosomal subunit protein uL30 (60 aa).

This sequence belongs to the universal ribosomal protein uL30 family. As to quaternary structure, part of the 50S ribosomal subunit.

In Baumannia cicadellinicola subsp. Homalodisca coagulata, this protein is Large ribosomal subunit protein uL30.